The primary structure comprises 504 residues: Signal recognition particle subunit SRP54 (504 aa).

The interval 1 to 295 (MVLADLGRKI…KTQPFISKLL (295 aa)) is NG domain. Residues 108-115 (GLQGSGKT), 190-194 (DTSGR), and 248-251 (TKLD) contribute to the GTP site. The M-domain stretch occupies residues 296–504 (GMGDIEGLID…MKGMMGFNNM (209 aa)).

This sequence belongs to the GTP-binding SRP family. SRP54 subfamily. Component of a signal recognition particle (SRP) complex that consists of a 7SL RNA molecule of 300 nucleotides and six protein subunits: SRP72, SRP68, SRP54, SRP19, SRP14 and SRP9. Interacts with RNPS1. Interacts with the SRP receptor subunit SRPRA.

It localises to the nucleus speckle. The protein localises to the cytoplasm. It is found in the endoplasmic reticulum. The enzyme catalyses GTP + H2O = GDP + phosphate + H(+). Component of the signal recognition particle (SRP) complex, a ribonucleoprotein complex that mediates the cotranslational targeting of secretory and membrane proteins to the endoplasmic reticulum (ER). As part of the SRP complex, associates with the SRP receptor (SR) component SRPRA to target secretory proteins to the endoplasmic reticulum membrane. Binds to the signal sequence of presecretory proteins when they emerge from the ribosomes. Displays basal GTPase activity, and stimulates reciprocal GTPase activation of the SR subunit SRPRA. Forms a guanosine 5'-triphosphate (GTP)-dependent complex with the SR subunit SRPRA. SR compaction and GTPase mediated rearrangement of SR drive SRP-mediated cotranslational protein translocation into the ER. Requires the presence of SRP9/SRP14 and/or SRP19 to stably interact with RNA. Plays a role in proliferation and differentiation of granulocytic cells, neutrophils migration capacity and exocrine pancreas development. The sequence is that of Signal recognition particle subunit SRP54 from Homo sapiens (Human).